The primary structure comprises 601 residues: UvrABC system protein C (601 aa).

The GIY-YIG domain maps to leucine 15–isoleucine 94. Positions glutamine 202 to leucine 237 constitute a UVR domain.

It belongs to the UvrC family. As to quaternary structure, interacts with UvrB in an incision complex.

Its subcellular location is the cytoplasm. In terms of biological role, the UvrABC repair system catalyzes the recognition and processing of DNA lesions. UvrC both incises the 5' and 3' sides of the lesion. The N-terminal half is responsible for the 3' incision and the C-terminal half is responsible for the 5' incision. In Syntrophomonas wolfei subsp. wolfei (strain DSM 2245B / Goettingen), this protein is UvrABC system protein C.